A 302-amino-acid chain; its full sequence is MWFKNLQLYRFTRPFEHDADSLEKMLQSHLFSPCGSQEMSKFGWISPLGKHAEVLVHEAQGQMLLCAKKEEKVLPAAVIKDMLQEKIDEMEAAQGRALKKKEKESLKEEILHTLLPRAFPRSSQTFLWINPAENYLVVDAGSAKKADDVLSLLRKCTGSLPVVPFALQNPPEITMTEWLNAGAAPGGFVLEDEAELRSALEHGGIIRCKEQDLVTEEIKAHLLADKMVTKLALNWSDTVSFVLADDLSIKRLKFSEELREQNEDVISEDHVARMDADFALMTGELAKFVPELVAALGGEKAE.

This sequence belongs to the RdgC family.

It localises to the cytoplasm. The protein localises to the nucleoid. Functionally, may be involved in recombination. The protein is Recombination-associated protein RdgC of Tolumonas auensis (strain DSM 9187 / NBRC 110442 / TA 4).